An 85-amino-acid polypeptide reads, in one-letter code: uncharacterized protein (85 aa).

A run of 2 helical transmembrane segments spans residues 16–34 and 50–71; these read WALSLSILYVIGWCLCAYL and LSCIYLPILFIVIGHWIIKIIF.

It to E.coli YhdT.

The protein resides in the cell membrane. This is an uncharacterized protein from Haemophilus influenzae (strain ATCC 51907 / DSM 11121 / KW20 / Rd).